The chain runs to 135 residues: MEPTEKSMLLETTSTTKMETKYEDMLPVMAEKMDVEEFVSELCKGFSLLADPERHLITAESLRRNSGILGIEGMSKEDAQGMVREGDLDGDGALNQTEFCVLMVRLSPEMMEDAETWLEKALTQELCNHNLSSMP.

Positions 74–109 (MSKEDAQGMVREGDLDGDGALNQTEFCVLMVRLSPE) constitute an EF-hand domain. The Ca(2+) site is built by Asp87, Asp89, Asp91, and Glu98.

In terms of assembly, interacts with KCBP (via C-terminus). KIC and calmodulin show competitive binding to KCBP. Interacts with CML42. Binds to ABCG36. As to expression, expressed in stems, leaves and flowers.

In terms of biological role, calcium-binding regulatory protein that interacts with kinesin motor protein KCBP in a calcium-dependent manner. Inhibits KCBP microtubule binding activity and microtubule-stimulated ATPase activity. Involved in the regulation of trichome branching through its interaction with KCBP. The protein is Calcium-binding protein KIC of Arabidopsis thaliana (Mouse-ear cress).